Consider the following 1029-residue polypeptide: Beta-galactosidase 2 (1029 aa).

Asn104 and Asp203 together coordinate substrate. Asp203 serves as a coordination point for Na(+). Positions 418, 420, and 463 each coordinate Mg(2+). Substrate-binding positions include Glu463 and Glu539–His542. Glu463 acts as the Proton donor in catalysis. The active-site Nucleophile is Glu539. Asn599 provides a ligand contact to Mg(2+). Residues Phe603 and Asn606 each coordinate Na(+). Positions 606 and 1004 each coordinate substrate.

Belongs to the glycosyl hydrolase 2 family. In terms of assembly, homotetramer. It depends on Mg(2+) as a cofactor. Na(+) is required as a cofactor.

It catalyses the reaction Hydrolysis of terminal non-reducing beta-D-galactose residues in beta-D-galactosides.. The sequence is that of Beta-galactosidase 2 from Enterobacter cloacae.